Here is an 86-residue protein sequence, read N- to C-terminus: MITITIVYFTNKIQHVKKIKLNIGTPVHEALKILQINIKKNNKIGIYGELVSLNHILNNKDRLEIYRPLKINPRELRKQKINRKLK.

This sequence belongs to the UPF0125 (RnfH) family.

The polypeptide is UPF0125 protein bbp_234 (Buchnera aphidicola subsp. Baizongia pistaciae (strain Bp)).